The chain runs to 780 residues: Cullin-5 (780 aa).

Ser-34 carries the post-translational modification Phosphoserine. Thr-210 carries the post-translational modification Phosphothreonine. Residues 711 to 772 enclose the Cullin neddylation domain; it reads RILRTQEAII…HKYIRRDESD (62 aa). A Glycyl lysine isopeptide (Lys-Gly) (interchain with G-Cter in NEDD8) cross-link involves residue Lys-724.

Belongs to the cullin family. As to quaternary structure, component of multiple cullin-5-RING E3 ubiquitin-protein ligase complexes (ECS complexes, also named CRL5 complexes) formed of CUL5, Elongin BC (ELOB and ELOC), RNF7/RBX2 and a variable SOCS box domain-containing protein as substrate-specific recognition component. CUL5-containing ECS complexes specifically contain RNF7/RBX2, and not RBX1, as catalytic subunit. Component of the ECS(ASB2) complex with the substrate recognition component ASB2. Component of the ECS(ASB6) complex with the substrate recognition component ASB6. Component of the ECS(ASB7) complex with the substrate recognition component ASB7. Component of the ECS(ASB9) complex with the substrate recognition component ASB9. Component of the ECS(ASB11) complex with the substrate recognition component ASB11. Component of the ECS(ASB12) complex with the substrate recognition component ASB12. Component of the ECS(LRRC41) complex with the substrate recognition component LRRC41. Component of the ECS(SOCS1) complex with the substrate recognition component SOCS1. Component of the ECS(SOCS2) complex with the substrate recognition component SOCS2. Component of the ECS(WSB1) complex with the substrate recognition subunit WSB1. Component of the ECS(SOCS3) complex with the substrate recognition component SOCS3. Component of the ECS(SOCS7) complex with the substrate recognition component SOCS7. Component of the ECS(SPSB1) complex with the substrate recognition component SPSB1. Component of the ECS(SPSB3) complex with the substrate recognition component SPSB3. Component of the ECS(SPSB2) complex with the substrate recognition component SPSB2. Component of the ECS(SPSB4) complex with the substrate recognition component SPSB4. Component of the ECS(RAB40) complex with the substrate recognition subunit RAB40A, RAB40B or RAB40C. Component of the ECS(KLHDC1) complex with the substrate recognition component KLHDC1. Component of the ECS(PCMTD1) complex with the substrate recognition subunit PCMTD1. May also form complexes containing RBX1 and ELOA or VHL; additional evidence is however required to confirm this result in vivo. Interacts (when neddylated) with ARIH2; leading to activate the E3 ligase activity of ARIH2. Interacts with ERCC6; the interaction is induced by DNA damaging agents or inhibitors of RNA polymerase II elongation. Interacts with ELOA (via the BC-box). Interacts (unneddylated form) with DCUN1D1, DCUN1D2, DCUN1D3, DCUN1D4 and DCUN1D5; these interactions promote the cullin neddylation. (Microbial infection) Interacts (via the substrate recognition component) with HIV-1 Vif; forming an active cullin-5-RING E3 ubiquitin-protein ligase complex (ECS complex). In terms of assembly, (Microbial infection) Interacts (via the substrate recognition component) with human adenovirus 5 proteins E1B-55K and E4-orf6. As to quaternary structure, (Microbial infection) Interacts with herpes virus 8 protein LANA1; this interaction promotes the degradation of NF-kappa-B component RELA. (Microbial infection) Interacts with molluscum contagiosum virus protein MC132; this interaction promotes the degradation of NF-kappa-B component RELA. Neddylated; which enhances the ubiquitination activity of ECS complexes and prevents binding of the inhibitor CAND1. Deneddylated via its interaction with the COP9 signalosome (CSN).

The protein localises to the nucleus. Its pathway is protein modification; protein ubiquitination. In terms of biological role, core component of multiple cullin-5-RING E3 ubiquitin-protein ligase complexes (ECS complexes, also named CRL5 complexes), which mediate the ubiquitination and subsequent proteasomal degradation of target proteins. Acts a scaffold protein that contributes to catalysis through positioning of the substrate and the ubiquitin-conjugating enzyme. The functional specificity of the E3 ubiquitin-protein ligase complex depends on the variable SOCS box-containing substrate recognition component. Acts as a key regulator of neuron positioning during cortex development: component of various SOCS-containing ECS complexes, such as the ECS(SOCS7) complex, that regulate reelin signaling by mediating ubiquitination and degradation of DAB1. ECS(SOCS1) seems to direct ubiquitination of JAK2. The ECS(SOCS2) complex mediates the ubiquitination and subsequent proteasomal degradation of phosphorylated EPOR and GHR. The ECS(SPSB3) complex catalyzes ubiquitination of nuclear CGAS. ECS(KLHDC1) complex is part of the DesCEND (destruction via C-end degrons) pathway and mediates ubiquitination and degradation of truncated SELENOS selenoprotein produced by failed UGA/Sec decoding, which ends with a glycine. The ECS(ASB9) complex mediates ubiquitination and degradation of CKB. As part of some ECS complex, promotes 'Lys-11'-linked ubiquitination and degradation of BTRC. As part of a multisubunit ECS complex, polyubiquitinates monoubiquitinated POLR2A. As part of the ECS(RAB40C) complex, mediates ANKRD28 ubiquitination and degradation, thereby inhibiting protein phosphatase 6 (PP6) complex activity and focal adhesion assembly during cell migration. As part of the ECS(RAB40A) complex, mediates RHOU 'Lys-48'-linked ubiquitination and degradation, thus inhibiting focal adhesion disassembly during cell migration. As part of the ECS(RAB40B) complex, mediates LIMA1/EPLIN and RAP2 ubiquitination, thereby regulating actin cytoskeleton dynamics and stress fiber formation during cell migration. May form a cell surface vasopressin receptor. (Microbial infection) Following infection by HIV-1 virus, CUL5 associates with HIV-1 Vif proteins and forms a cullin-5-RING E3 ubiquitin-protein ligase complex (ECS complex) that catalyzes ubiquitination and degradation of APOBEC3F and APOBEC3G. The complex can also ubiquitinate APOBEC3H to some extent. Its function is as follows. (Microbial infection) Seems to be involved in proteasomal degradation of p53/TP53 stimulated by adenovirus E1B-55 kDa protein. This Homo sapiens (Human) protein is Cullin-5.